We begin with the raw amino-acid sequence, 208 residues long: Protein JLP2 (208 aa).

The span at 185-194 (AKKNQKKKNK) shows a compositional bias: basic residues. The disordered stretch occupies residues 185 to 208 (AKKNQKKKNKQSKDEVTDDMQLEV).

Belongs to the CCDC25 family.

It is found in the cytoplasm. The protein is Protein JLP2 (JLP2) of Saccharomyces cerevisiae (strain ATCC 204508 / S288c) (Baker's yeast).